The following is a 73-amino-acid chain: Kappa-scoloptoxin(03)-Ssm1b (73 aa).

Residues Met1–Ser23 form the signal peptide. Disulfide bonds link Cys32/Cys58, Cys41/Cys57, and Cys44/Cys67.

Post-translationally, contains 3 disulfide bonds. As to expression, expressed by the venom gland.

The protein localises to the secreted. Functionally, inhibits voltage-gated potassium channels. This Scolopendra mutilans (Chinese red-headed centipede) protein is Kappa-scoloptoxin(03)-Ssm1b.